Reading from the N-terminus, the 466-residue chain is Cysteine--tRNA ligase (466 aa).

Residue C28 coordinates Zn(2+). The 'HIGH' region signature appears at 30–40; it reads PTVYNYIHIGN. 3 residues coordinate Zn(2+): C208, H233, and E237. The 'KMSKS' region signature appears at 265 to 269; it reads KMSKS. K268 contacts ATP.

It belongs to the class-I aminoacyl-tRNA synthetase family. As to quaternary structure, monomer. It depends on Zn(2+) as a cofactor.

Its subcellular location is the cytoplasm. It carries out the reaction tRNA(Cys) + L-cysteine + ATP = L-cysteinyl-tRNA(Cys) + AMP + diphosphate. The protein is Cysteine--tRNA ligase of Staphylococcus aureus (strain MRSA252).